A 401-amino-acid chain; its full sequence is Argininosuccinate synthase (401 aa).

ATP contacts are provided by residues 10–18 and alanine 38; that span reads AYSGGVDTS. L-citrulline is bound at residue tyrosine 89. An ATP-binding site is contributed by glycine 119. L-aspartate is bound by residues threonine 121, asparagine 125, and aspartate 126. Residue asparagine 125 participates in L-citrulline binding. Arginine 129, serine 177, serine 186, glutamate 262, and tyrosine 274 together coordinate L-citrulline.

It belongs to the argininosuccinate synthase family. Type 1 subfamily. Homotetramer.

It localises to the cytoplasm. It carries out the reaction L-citrulline + L-aspartate + ATP = 2-(N(omega)-L-arginino)succinate + AMP + diphosphate + H(+). The protein operates within amino-acid biosynthesis; L-arginine biosynthesis; L-arginine from L-ornithine and carbamoyl phosphate: step 2/3. This is Argininosuccinate synthase from Microcystis aeruginosa (strain NIES-843 / IAM M-2473).